Consider the following 219-residue polypeptide: Transcription factor MYB23 (219 aa).

HTH myb-type domains are found at residues 9–61 and 62–116; these read EHEY…MNYL and SPNV…SKKL. DNA-binding regions (H-T-H motif) lie at residues 37-61 and 89-112; these read WNRI…MNYL and WSLI…NTHL.

Interacts with BHLH2/EGL3/MYC146, BHLH12/MYC1 and GL3. Expressed in roots, seed coats, leaves, stems and flowers. Detected specifically in trichomes, and in the cell division and differentiation zone of the root.

It localises to the nucleus. Its function is as follows. Transcription activator, when associated with BHLH2/EGL3/MYC146 or BHLH12/MYC1. Regulates the epidermal cell fate specification. Mediates the formation of columellae and accumulation of mucilages on seed coats. Controls the elongation of epidermal cells positively in roots but negatively in stems, leading to the promotion of primary roots elongation and repression of leaves and stems elongation, respectively. Ovoids ectopic root-hair formation, probably by inducing GL2 in roots. Controls trichome initiation and branching. The protein is Transcription factor MYB23 (MYB23) of Arabidopsis thaliana (Mouse-ear cress).